The chain runs to 205 residues: Ras-related protein Rab-1A (205 aa).

Residue serine 2 is modified to N-acetylserine. 8 residues coordinate GTP: serine 20, glycine 21, glycine 23, lysine 24, serine 25, cysteine 26, glutamate 38, and threonine 43. Serine 25 is a Mg(2+) binding site. Positions 34-48 match the Switch 1 motif; it reads DTYTESYISTIGVDF. Residue threonine 43 coordinates Mg(2+). Glycyl lysine isopeptide (Lys-Gly) (interchain with G-Cter in ubiquitin) cross-links involve residues lysine 49 and lysine 61. Aspartate 66 lines the Mg(2+) pocket. Positions 66 to 83 match the Switch 2 motif; sequence DTAGQERFRTITSSYYRG. Positions 69, 124, 125, 127, 155, and 156 each coordinate GTP. Positions 178–205 are disordered; that stretch reads PGATAGGAEKSNVKIQSTPVKQSGGGCC. Residue serine 194 is modified to Phosphoserine. 2 S-geranylgeranyl cysteine lipidation sites follow: cysteine 204 and cysteine 205.

Belongs to the small GTPase superfamily. Rab family. May interact with YIPF5. Interacts with C9orf72; the interaction mediates recruitment of RAB1A to the ATG1/ULK1 kinase complex. Interacts with GDI1; this promotes dissociation from membranes. The cofactor is Mg(2+). Post-translationally, phosphorylated by CDK1 kinase during mitosis. In terms of processing, ubiquitinated via 'Lys-11'-linked ubiquitination on Lys-49 and Lys-61; impairing the recruitment of guanosine diphosphate (GDP) dissociation inhibitor 1/GDI1.

The protein localises to the golgi apparatus. Its subcellular location is the endoplasmic reticulum. It localises to the early endosome. The protein resides in the cytoplasm. It is found in the cytosol. The protein localises to the membrane. Its subcellular location is the melanosome. The enzyme catalyses GTP + H2O = GDP + phosphate + H(+). Regulated by guanine nucleotide exchange factors (GEFs) which promote the exchange of bound GDP for free GTP. Regulated by GTPase activating proteins (GAPs) which increase the GTP hydrolysis activity. Inhibited by GDP dissociation inhibitors (GDIs). In terms of biological role, the small GTPases Rab are key regulators of intracellular membrane trafficking, from the formation of transport vesicles to their fusion with membranes. Rabs cycle between an inactive GDP-bound form and an active GTP-bound form that is able to recruit to membranes different sets of downstream effectors directly responsible for vesicle formation, movement, tethering and fusion. RAB1A regulates vesicular protein transport from the endoplasmic reticulum (ER) to the Golgi compartment and on to the cell surface, and plays a role in IL-8 and growth hormone secretion. Required to modulate the compacted morphology of the Golgi. Regulates the level of CASR present at the cell membrane. Plays a role in cell adhesion and cell migration, via its role in protein trafficking. Plays a role in autophagosome assembly and cellular defense reactions against pathogenic bacteria. Plays a role in microtubule-dependent protein transport by early endosomes and in anterograde melanosome transport. The polypeptide is Ras-related protein Rab-1A (RAB1A) (Canis lupus familiaris (Dog)).